Consider the following 174-residue polypeptide: Heat shock protein 22 (174 aa).

Residues Gln44 to Glu154 form the sHSP domain. Residue Thr152 is modified to Phosphothreonine. The segment at Thr152–Gln174 is disordered. Positions Pro159–Gln174 are enriched in basic and acidic residues.

It belongs to the small heat shock protein (HSP20) family.

The polypeptide is Heat shock protein 22 (Hsp22) (Drosophila melanogaster (Fruit fly)).